We begin with the raw amino-acid sequence, 412 residues long: 1-deoxy-D-xylulose 5-phosphate reductoisomerase (412 aa).

7 residues coordinate NADPH: threonine 5, glycine 6, serine 7, isoleucine 8, glycine 31, asparagine 33, and asparagine 125. Lysine 126 contacts 1-deoxy-D-xylulose 5-phosphate. Glutamate 127 provides a ligand contact to NADPH. Aspartate 151 lines the Mn(2+) pocket. 1-deoxy-D-xylulose 5-phosphate-binding residues include serine 152, glutamate 153, serine 189, and histidine 212. A Mn(2+)-binding site is contributed by glutamate 153. Glycine 218 provides a ligand contact to NADPH. 1-deoxy-D-xylulose 5-phosphate contacts are provided by serine 225, asparagine 230, lysine 231, and glutamate 234. Glutamate 234 lines the Mn(2+) pocket.

It belongs to the DXR family. The cofactor is Mg(2+). Requires Mn(2+) as cofactor.

It catalyses the reaction 2-C-methyl-D-erythritol 4-phosphate + NADP(+) = 1-deoxy-D-xylulose 5-phosphate + NADPH + H(+). The protein operates within isoprenoid biosynthesis; isopentenyl diphosphate biosynthesis via DXP pathway; isopentenyl diphosphate from 1-deoxy-D-xylulose 5-phosphate: step 1/6. Its function is as follows. Catalyzes the NADPH-dependent rearrangement and reduction of 1-deoxy-D-xylulose-5-phosphate (DXP) to 2-C-methyl-D-erythritol 4-phosphate (MEP). This chain is 1-deoxy-D-xylulose 5-phosphate reductoisomerase, found in Prochlorococcus marinus (strain MIT 9313).